Reading from the N-terminus, the 406-residue chain is Phosphopentomutase (406 aa).

Mn(2+) is bound by residues Asp-10, Asp-305, His-310, Asp-346, His-347, and His-358.

This sequence belongs to the phosphopentomutase family. Requires Mn(2+) as cofactor.

The protein resides in the cytoplasm. It catalyses the reaction 2-deoxy-alpha-D-ribose 1-phosphate = 2-deoxy-D-ribose 5-phosphate. It carries out the reaction alpha-D-ribose 1-phosphate = D-ribose 5-phosphate. It functions in the pathway carbohydrate degradation; 2-deoxy-D-ribose 1-phosphate degradation; D-glyceraldehyde 3-phosphate and acetaldehyde from 2-deoxy-alpha-D-ribose 1-phosphate: step 1/2. Isomerase that catalyzes the conversion of deoxy-ribose 1-phosphate (dRib-1-P) and ribose 1-phosphate (Rib-1-P) to deoxy-ribose 5-phosphate (dRib-5-P) and ribose 5-phosphate (Rib-5-P), respectively. In Agrobacterium fabrum (strain C58 / ATCC 33970) (Agrobacterium tumefaciens (strain C58)), this protein is Phosphopentomutase.